A 282-amino-acid chain; its full sequence is Kallikrein-11 (282 aa).

Residues 1 to 50 form the signal peptide; it reads MQRLRWLRDWKSSGRGLTAAKEPGARSSPLQAMRILQLILLALATGLVGG. Residues 51–53 constitute a propeptide, activation peptide; that stretch reads ETR. In terms of domain architecture, Peptidase S1 spans 53-280; it reads RIIKGFECKP…YVDWIQETMK (228 aa). 6 disulfides stabilise this stretch: C60-C195, C79-C95, C167-C269, C174-C241, C206-C220, and C231-C256. The active-site Charge relay system is H94. N-linked (GlcNAc...) asparagine glycosylation is present at N131. D142 acts as the Charge relay system in catalysis. N197 and N213 each carry an N-linked (GlcNAc...) asparagine glycan. The Charge relay system role is filled by S235. N242 is a glycosylation site (N-linked (GlcNAc...) asparagine).

The protein belongs to the peptidase S1 family. Kallikrein subfamily. About 40% of KLK11 is inactivated by internal cleavage after Arg-188. This proteolytic inactivation may be effected by plasminogen. Expressed in brain, skin and prostate. Isoform 1 is expressed preferentially in brain. Isoform 2 is expressed in prostate. Present in seminal plasma at concentrations ranging from 2 to 37 microg/mL (at protein level).

It localises to the secreted. It is found in the golgi apparatus. In terms of biological role, possible multifunctional protease. Efficiently cleaves 'bz-Phe-Arg-4-methylcoumaryl-7-amide', a kallikrein substrate, and weakly cleaves other substrates for kallikrein and trypsin. Cleaves synthetic peptides after arginine but not lysine residues. The sequence is that of Kallikrein-11 (KLK11) from Homo sapiens (Human).